The sequence spans 552 residues: Alcohol dehydrogenase [acceptor] (552 aa).

3-32 (DYIIVGAGSAGCVLANRLSADPSKRVCLLE) provides a ligand contact to FAD. Catalysis depends on His469, which acts as the Proton acceptor.

The protein belongs to the GMC oxidoreductase family. Requires FAD as cofactor.

The protein resides in the cell inner membrane. The enzyme catalyses a primary alcohol + A = an aldehyde + AH2. Functionally, converts aliphatic medium-chain-length alcohols into aldehydes. May be linked to the electron transfer chain. The polypeptide is Alcohol dehydrogenase [acceptor] (alkJ) (Pseudomonas putida (Arthrobacter siderocapsulatus)).